The following is a 347-amino-acid chain: NADH-quinone oxidoreductase subunit H (347 aa).

The next 8 membrane-spanning stretches (helical) occupy residues 13-33 (LLIL…VAYI), 82-102 (GVFL…WAVI), 115-135 (VGIL…IMGG), 161-181 (IGFV…SDIV), 198-218 (FLDW…ISAL), 248-268 (FLLF…LATI), 283-303 (FTWV…FFGI), and 321-341 (LGWK…AAFL).

The protein belongs to the complex I subunit 1 family. In terms of assembly, NDH-1 is composed of 14 different subunits. Subunits NuoA, H, J, K, L, M, N constitute the membrane sector of the complex.

It localises to the cell inner membrane. The catalysed reaction is a quinone + NADH + 5 H(+)(in) = a quinol + NAD(+) + 4 H(+)(out). Functionally, NDH-1 shuttles electrons from NADH, via FMN and iron-sulfur (Fe-S) centers, to quinones in the respiratory chain. The immediate electron acceptor for the enzyme in this species is believed to be ubiquinone. Couples the redox reaction to proton translocation (for every two electrons transferred, four hydrogen ions are translocated across the cytoplasmic membrane), and thus conserves the redox energy in a proton gradient. This subunit may bind ubiquinone. The protein is NADH-quinone oxidoreductase subunit H of Mesorhizobium japonicum (strain LMG 29417 / CECT 9101 / MAFF 303099) (Mesorhizobium loti (strain MAFF 303099)).